Consider the following 463-residue polypeptide: Bifunctional protein HldE (463 aa).

The ribokinase stretch occupies residues M1 to I315. Residue N191 to E194 participates in ATP binding. Residue D260 is part of the active site. Residues F334–D463 form a cytidylyltransferase region.

The protein in the N-terminal section; belongs to the carbohydrate kinase PfkB family. In the C-terminal section; belongs to the cytidylyltransferase family. Homodimer.

The catalysed reaction is D-glycero-beta-D-manno-heptose 7-phosphate + ATP = D-glycero-beta-D-manno-heptose 1,7-bisphosphate + ADP + H(+). It catalyses the reaction D-glycero-beta-D-manno-heptose 1-phosphate + ATP + H(+) = ADP-D-glycero-beta-D-manno-heptose + diphosphate. Its pathway is nucleotide-sugar biosynthesis; ADP-L-glycero-beta-D-manno-heptose biosynthesis; ADP-L-glycero-beta-D-manno-heptose from D-glycero-beta-D-manno-heptose 7-phosphate: step 1/4. It functions in the pathway nucleotide-sugar biosynthesis; ADP-L-glycero-beta-D-manno-heptose biosynthesis; ADP-L-glycero-beta-D-manno-heptose from D-glycero-beta-D-manno-heptose 7-phosphate: step 3/4. Its function is as follows. Catalyzes the phosphorylation of D-glycero-D-manno-heptose 7-phosphate at the C-1 position to selectively form D-glycero-beta-D-manno-heptose-1,7-bisphosphate. Functionally, catalyzes the ADP transfer from ATP to D-glycero-beta-D-manno-heptose 1-phosphate, yielding ADP-D-glycero-beta-D-manno-heptose. The protein is Bifunctional protein HldE of Helicobacter acinonychis (strain Sheeba).